The primary structure comprises 318 residues: Acetyl-coenzyme A carboxylase carboxyl transferase subunit alpha (318 aa).

In terms of domain architecture, CoA carboxyltransferase C-terminal spans 41-295; that stretch reads HLEKKNEELT…KQRILTDLNE (255 aa).

This sequence belongs to the AccA family. In terms of assembly, acetyl-CoA carboxylase is a heterohexamer composed of biotin carboxyl carrier protein (AccB), biotin carboxylase (AccC) and two subunits each of ACCase subunit alpha (AccA) and ACCase subunit beta (AccD).

It is found in the cytoplasm. It catalyses the reaction N(6)-carboxybiotinyl-L-lysyl-[protein] + acetyl-CoA = N(6)-biotinyl-L-lysyl-[protein] + malonyl-CoA. It participates in lipid metabolism; malonyl-CoA biosynthesis; malonyl-CoA from acetyl-CoA: step 1/1. Functionally, component of the acetyl coenzyme A carboxylase (ACC) complex. First, biotin carboxylase catalyzes the carboxylation of biotin on its carrier protein (BCCP) and then the CO(2) group is transferred by the carboxyltransferase to acetyl-CoA to form malonyl-CoA. The chain is Acetyl-coenzyme A carboxylase carboxyl transferase subunit alpha from Tolumonas auensis (strain DSM 9187 / NBRC 110442 / TA 4).